Here is a 257-residue protein sequence, read N- to C-terminus: MKKIIEVNNVSYHYDKEHALENIHFQVAKGSFTGLIGPNGSGKSTMLKLILGVLKKQQGSISLFGEKQADFKDWVKIGFVSQKSNAFNSAFPATVKEVVASGLTKKKGLFKTLNNKDKEDIDYALKRVEMTDYLHRNIGELSGGQQQRVFIARALVSRPELLILDEPTVGVDVENVKAFYELLAELNRTEEMTLLLVTHDLMAVNTYVNHVISINKRIIFDGSAHEYQHYLADRELEILAEQRRREDACLDCDASPV.

The ABC transporter domain maps to Ile5 to Glu241. Gly37–Ser44 serves as a coordination point for ATP.

It belongs to the ABC transporter superfamily.

Involved in a zinc uptake transport system. This chain is Zinc uptake system ATP-binding protein ZurA (zurA), found in Listeria monocytogenes serovar 1/2a (strain ATCC BAA-679 / EGD-e).